Reading from the N-terminus, the 495-residue chain is Potassium voltage-gated channel subfamily A member 1 (495 aa).

The tract at residues 1 to 30 is disordered; that stretch reads MTVMSGENADEASAAPGHPQDGSYPRQADH. Residues 1–128 are tetramerization domain; that stretch reads MTVMSGENAD…FYELGEEAME (128 aa). The Cytoplasmic portion of the chain corresponds to 1–164; that stretch reads MTVMSGENAD…LLFEYPESSG (164 aa). S23 carries the phosphoserine modification. Residues 165 to 186 traverse the membrane as a helical segment; the sequence is PARVIAIVSVMVILISIVIFCL. Residues 187–220 are Extracellular-facing; sequence ETLPELKDDKDFTGTIHRIDNTTVIYTSNIFTDP. N207 carries an N-linked (GlcNAc...) asparagine glycan. A helical transmembrane segment spans residues 221–242; it reads FFIVETLCIIWFSFELVVRFFA. A lipid anchor (S-palmitoyl cysteine) is attached at C243. The Cytoplasmic segment spans residues 243–253; that stretch reads CPSKTDFFKNI. A helical membrane pass occupies residues 254 to 274; the sequence is MNFIDIVAIIPYFITLGTEIA. Over 275 to 287 the chain is Extracellular; the sequence is EQEGNQKGEQATS. A helical; Voltage-sensor membrane pass occupies residues 288-308; sequence LAILRVIRLVRVFRIFKLSRH. Over 309–323 the chain is Cytoplasmic; it reads SKGLQILGQTLKASM. Residues 310 to 323 form an S4-S5 linker region; sequence KGLQILGQTLKASM. S322 is subject to Phosphoserine; by PKA. The helical transmembrane segment at 324-345 threads the bilayer; it reads RELGLLIFFLFIGVILFSSAVY. The Extracellular portion of the chain corresponds to 346-359; it reads FAEAEEAESHFSSI. An intramembrane region (helical) is located at residues 360–371; the sequence is PDAFWWAVVSMT. The Selectivity filter motif lies at 372–377; the sequence is TVGYGD. The stretch at 372–379 is an intramembrane region; that stretch reads TVGYGDMY. Residues 380–386 are Extracellular-facing; that stretch reads PVTIGGK. Residues 387–415 form a helical membrane-spanning segment; the sequence is IVGSLCAIAGVLTIALPVPVIVSNFNYFY. Over 416–495 the chain is Cytoplasmic; the sequence is HRETEGEEQA…VNKSKLLTDV (80 aa). S437 and S439 each carry phosphoserine. S446 is modified (phosphoserine; by PKA). Residues 493–495 carry the PDZ-binding motif; sequence TDV.

Belongs to the potassium channel family. A (Shaker) (TC 1.A.1.2) subfamily. Kv1.1/KCNA1 sub-subfamily. In terms of assembly, homotetramer and heterotetramer with other channel-forming alpha subunits, such as KCNA2, KCNA4, KCNA5, KCNA6 and KCNA7. Channel activity is regulated by interaction with the beta subunits KCNAB1 and KCNAB2. Identified in a complex with KCNA2 and KCNAB2. Interacts (via C-terminus) with the PDZ domains of DLG1, DLG2 and DLG4. Interacts with LGI1 within a complex containing LGI1, KCNA4 and KCNAB1. Interacts (via cytoplasmic N-terminal domain) with KCNRG; this inhibits channel activity. Interacts with ANK3; this inhibits channel activity. Interacts (via N-terminus) with STX1A; this promotes channel inactivation. Interacts (via N-terminus) with the heterodimer formed by GNB1 and GNG2; this promotes channel inactivation. Can interact simultaneously with STX1A and the heterodimer formed by GNB1 and GNG2. Interacts with ADAM11. In terms of processing, palmitoylated on Cys-243; which may be required for membrane targeting. N-glycosylated. Post-translationally, phosphorylated on tyrosine residues. Phosphorylation increases in response to NRG1; this inhibits channel activity. Phosphorylated by PKA. Phosphorylation at Ser-446 regulates channel activity by down-regulating expression at the cell membrane. As to expression, detected in hippocampus, in the middle third of the molecular layer of the dentate gyrus and in stratum radiatum and stratum oriens. Detected in the mossy fiber zone in the hippocampus CA3 region, at or near axon terminals. Detected in brain cortex, at basket cell terminals. Detected adjacent to nodes of Ranvier in juxtaparanodal zones in spinal cord nerve fibers, but also in paranodal regions in some myelinated spinal cord axons. Detected in juxtaparanodal regions adjacent to the nodes of Ranvier in myelinated axons in cerebellar white matter. Detected in sensory neurons. Detected in neurons from the medial nucleus of the trapezoid body. Detected in basolateral amygdala. Detected in the paraventricular nucleus of the hypothalamus. Detected in the islet of Langerhans (at protein level).

The protein resides in the cell membrane. It localises to the membrane. The protein localises to the cell projection. It is found in the axon. Its subcellular location is the cytoplasmic vesicle. The protein resides in the perikaryon. It localises to the endoplasmic reticulum. The protein localises to the dendrite. It is found in the cell junction. Its subcellular location is the synapse. The protein resides in the presynapse. It localises to the presynaptic cell membrane. It catalyses the reaction K(+)(in) = K(+)(out). With respect to regulation, inhibited by 4-aminopyridine (4-AP) and by tetraethylammonium (TEA). Inhibited by kaliotoxin (KTX). In terms of biological role, voltage-gated potassium channel that mediates transmembrane potassium transport in excitable membranes, primarily in the brain and the central nervous system, but also in the kidney. Contributes to the regulation of the membrane potential and nerve signaling, and prevents neuronal hyperexcitability. Forms tetrameric potassium-selective channels through which potassium ions pass in accordance with their electrochemical gradient. The channel alternates between opened and closed conformations in response to the voltage difference across the membrane. Can form functional homotetrameric channels and heterotetrameric channels that contain variable proportions of KCNA1, KCNA2, KCNA4, KCNA5, KCNA6, KCNA7, and possibly other family members as well; channel properties depend on the type of alpha subunits that are part of the channel. Channel properties are modulated by cytoplasmic beta subunits that regulate the subcellular location of the alpha subunits and promote rapid inactivation of delayed rectifier potassium channels. In vivo, membranes probably contain a mixture of heteromeric potassium channel complexes, making it difficult to assign currents observed in intact tissues to any particular potassium channel family member. Homotetrameric KCNA1 forms a delayed-rectifier potassium channel that opens in response to membrane depolarization, followed by slow spontaneous channel closure. In contrast, a heterotetrameric channel formed by KCNA1 and KCNA4 shows rapid inactivation. Regulates neuronal excitability in hippocampus, especially in mossy fibers and medial perforant path axons, preventing neuronal hyperexcitability. Response to toxins that are selective for KCNA1, respectively for KCNA2, suggests that heteromeric potassium channels composed of both KCNA1 and KCNA2 play a role in pacemaking and regulate the output of deep cerebellar nuclear neurons. May function as down-stream effector for G protein-coupled receptors and inhibit GABAergic inputs to basolateral amygdala neurons. May contribute to the regulation of neurotransmitter release, such as gamma-aminobutyric acid (GABA) release. Plays a role in regulating the generation of action potentials and preventing hyperexcitability in myelinated axons of the vagus nerve, and thereby contributes to the regulation of heart contraction. Required for normal neuromuscular responses. Regulates the frequency of neuronal action potential firing in response to mechanical stimuli, and plays a role in the perception of pain caused by mechanical stimuli, but does not play a role in the perception of pain due to heat stimuli. Required for normal responses to auditory stimuli and precise location of sound sources, but not for sound perception. The use of toxins that block specific channels suggest that it contributes to the regulation of the axonal release of the neurotransmitter dopamine. Required for normal postnatal brain development and normal proliferation of neuronal precursor cells in the brain. Plays a role in the reabsorption of Mg(2+) in the distal convoluted tubules in the kidney and in magnesium ion homeostasis, probably via its effect on the membrane potential. This is Potassium voltage-gated channel subfamily A member 1 from Rattus norvegicus (Rat).